The following is a 311-amino-acid chain: Exosome complex component Rrp4 (311 aa).

Positions 63-131 (GDVVIGEITD…EVKKVKLGLK (69 aa)) constitute an S1 motif domain. One can recognise a KH domain in the interval 139-197 (RDGILVYITPTKVPRLIGKRGSMINMVKEKTHCDIVVGQNGVVWIKGEPDMERIAEKVV). A disordered region spans residues 222-311 (GVEPEIQVEE…EVKDENNSER (90 aa)). Residues 241–300 (PESEDFEEASDYSEDVEVSPESEDIEEVSDESEDLEVESEDVEEGTDTPAAEEDDGEAGD) show a composition bias toward acidic residues. The span at 301–311 (AEVKDENNSER) shows a compositional bias: basic and acidic residues.

Belongs to the RRP4 family. In terms of assembly, component of the archaeal exosome complex. Forms a trimer of Rrp4 and/or Csl4 subunits. The trimer associates with a hexameric ring-like arrangement composed of 3 Rrp41-Rrp42 heterodimers.

It is found in the cytoplasm. Its function is as follows. Non-catalytic component of the exosome, which is a complex involved in RNA degradation. Increases the RNA binding and the efficiency of RNA degradation. Confers strong poly(A) specificity to the exosome. This chain is Exosome complex component Rrp4, found in Methanothermobacter thermautotrophicus (strain ATCC 29096 / DSM 1053 / JCM 10044 / NBRC 100330 / Delta H) (Methanobacterium thermoautotrophicum).